A 377-amino-acid chain; its full sequence is Methylthioribose-1-phosphate isomerase (377 aa).

Asp254 serves as the catalytic Proton donor.

It belongs to the eIF-2B alpha/beta/delta subunits family. MtnA subfamily.

Its subcellular location is the cytoplasm. It is found in the nucleus. The enzyme catalyses 5-(methylsulfanyl)-alpha-D-ribose 1-phosphate = 5-(methylsulfanyl)-D-ribulose 1-phosphate. It functions in the pathway amino-acid biosynthesis; L-methionine biosynthesis via salvage pathway; L-methionine from S-methyl-5-thio-alpha-D-ribose 1-phosphate: step 1/6. Functionally, catalyzes the interconversion of methylthioribose-1-phosphate (MTR-1-P) into methylthioribulose-1-phosphate (MTRu-1-P). This is Methylthioribose-1-phosphate isomerase (mri1) from Aspergillus terreus (strain NIH 2624 / FGSC A1156).